The sequence spans 496 residues: Nucleolar and spindle-associated protein 1-B (496 aa).

Disordered stretches follow at residues 44-206, 250-294, and 338-496; these read YPES…HEAH, TPVS…STAN, and KSSS…VPVK. A compositionally biased stretch (polar residues) spans 56–69; sequence GCTSLTDTDELNSS. Residues 121 to 134 are compositionally biased toward basic and acidic residues; that stretch reads TQDKDCLESKKKEV. The span at 150-159 shows a compositional bias: polar residues; sequence QDTSKQNNSE. The span at 261-281 shows a compositional bias: low complexity; it reads SRLSLLSPLPRTTGASPSRTP. Composition is skewed to polar residues over residues 376–396 and 403–423; these read NTTI…NKAN and AQNT…QASL. Positions 447–459 are enriched in low complexity; that stretch reads SGSNSNVSVLKNN. Residues 467 to 485 show a composition bias toward basic and acidic residues; the sequence is TREERRKQHELDRKGKRDQ.

It belongs to the NUSAP family. Interacts with DNA, microtubules, ipo7, kpna2 and kpnb1. Microtubule stabilization is inhibited by ipo7 and kpna2, while microtubule bundling is inhibited by kpnb1. Active GTP-bound ran causes dissociation of ipo7 and kpnb1.

It localises to the cytoplasm. The protein localises to the nucleus. The protein resides in the cytoskeleton. It is found in the spindle. Its function is as follows. Microtubule-associated protein with the capacity to bundle and stabilize microtubules. May associate with chromosomes and promote the organization of meiotic or mitotic spindle microtubules around them. In Xenopus laevis (African clawed frog), this protein is Nucleolar and spindle-associated protein 1-B (nusap1-b).